The following is a 478-amino-acid chain: ATP synthase subunit beta (478 aa).

163-170 (GGAGVGKT) is a binding site for ATP.

This sequence belongs to the ATPase alpha/beta chains family. In terms of assembly, F-type ATPases have 2 components, CF(1) - the catalytic core - and CF(0) - the membrane proton channel. CF(1) has five subunits: alpha(3), beta(3), gamma(1), delta(1), epsilon(1). CF(0) has three main subunits: a(1), b(2) and c(9-12). The alpha and beta chains form an alternating ring which encloses part of the gamma chain. CF(1) is attached to CF(0) by a central stalk formed by the gamma and epsilon chains, while a peripheral stalk is formed by the delta and b chains.

Its subcellular location is the cell inner membrane. It catalyses the reaction ATP + H2O + 4 H(+)(in) = ADP + phosphate + 5 H(+)(out). Functionally, produces ATP from ADP in the presence of a proton gradient across the membrane. The catalytic sites are hosted primarily by the beta subunits. The polypeptide is ATP synthase subunit beta (Aquifex pyrophilus).